A 315-amino-acid chain; its full sequence is Glycerol-3-phosphate dehydrogenase [NAD(P)+] (315 aa).

4 residues coordinate NADPH: W24, R44, R45, and K92. The sn-glycerol 3-phosphate site is built by K92 and G120. Residue S124 coordinates NADPH. Residues K175, D228, S238, R239, and N240 each contribute to the sn-glycerol 3-phosphate site. The Proton acceptor role is filled by K175. R239 contacts NADPH. An NADPH-binding site is contributed by E265.

Belongs to the NAD-dependent glycerol-3-phosphate dehydrogenase family.

Its subcellular location is the cytoplasm. The catalysed reaction is sn-glycerol 3-phosphate + NAD(+) = dihydroxyacetone phosphate + NADH + H(+). It catalyses the reaction sn-glycerol 3-phosphate + NADP(+) = dihydroxyacetone phosphate + NADPH + H(+). It functions in the pathway membrane lipid metabolism; glycerophospholipid metabolism. In terms of biological role, catalyzes the reduction of the glycolytic intermediate dihydroxyacetone phosphate (DHAP) to sn-glycerol 3-phosphate (G3P), the key precursor for phospholipid synthesis. This is Glycerol-3-phosphate dehydrogenase [NAD(P)+] from Synechococcus sp. (strain JA-2-3B'a(2-13)) (Cyanobacteria bacterium Yellowstone B-Prime).